The primary structure comprises 1058 residues: Carbamoyl phosphate synthase pyrimidine-specific large chain (1058 aa).

The interval 1–401 (MPKRTDIHKI…ATLKAVRSLE (401 aa)) is carboxyphosphate synthetic domain. Residues Arg-129, Arg-169, Gly-175, Gly-176, Gln-208, Ile-210, Glu-215, Gly-241, Ile-242, His-243, Gln-284, and Glu-298 each coordinate ATP. Residues 133–327 (KALMEELGEP…IAKMAAKIAV (195 aa)) form the ATP-grasp 1 domain. Mg(2+) contacts are provided by Gln-284, Glu-298, and Asn-300. Residues Gln-284, Glu-298, and Asn-300 each contribute to the Mn(2+) site. Residues 402-546 (IGVHHVEEPA…YGTYEFENES (145 aa)) are oligomerization domain. Positions 547–929 (IVTKRPSVLV…ALYKAFEAAK (383 aa)) are carbamoyl phosphate synthetic domain. The region spanning 671–861 (DKVIKALAIP…MAQVATRAIL (191 aa)) is the ATP-grasp 2 domain. The ATP site is built by Arg-707, Ser-746, Leu-748, Glu-752, Gly-777, Val-778, His-779, Ser-780, Gln-820, and Glu-832. The Mg(2+) site is built by Gln-820, Glu-832, and Asn-834. The Mn(2+) site is built by Gln-820, Glu-832, and Asn-834. Positions 930-1058 (LHVPSHGNVL…ESQSFVTQAL (129 aa)) constitute an MGS-like domain. The tract at residues 930–1058 (LHVPSHGNVL…ESQSFVTQAL (129 aa)) is allosteric domain.

It belongs to the CarB family. In terms of assembly, composed of two chains; the small (or glutamine) chain promotes the hydrolysis of glutamine to ammonia, which is used by the large (or ammonia) chain to synthesize carbamoyl phosphate. Tetramer of heterodimers (alpha,beta)4. It depends on Mg(2+) as a cofactor. The cofactor is Mn(2+).

It catalyses the reaction hydrogencarbonate + L-glutamine + 2 ATP + H2O = carbamoyl phosphate + L-glutamate + 2 ADP + phosphate + 2 H(+). It carries out the reaction hydrogencarbonate + NH4(+) + 2 ATP = carbamoyl phosphate + 2 ADP + phosphate + 2 H(+). Its pathway is amino-acid biosynthesis; L-arginine biosynthesis; carbamoyl phosphate from bicarbonate: step 1/1. It functions in the pathway pyrimidine metabolism; UMP biosynthesis via de novo pathway; (S)-dihydroorotate from bicarbonate: step 1/3. Small subunit of the glutamine-dependent carbamoyl phosphate synthetase (CPSase). CPSase catalyzes the formation of carbamoyl phosphate from the ammonia moiety of glutamine, carbonate, and phosphate donated by ATP, constituting the first step of the biosynthetic pathway leading to pyrimidine nucleotides. The large subunit (synthetase) binds the substrates ammonia (free or transferred from glutamine from the small subunit), hydrogencarbonate and ATP and carries out an ATP-coupled ligase reaction, activating hydrogencarbonate by forming carboxy phosphate which reacts with ammonia to form carbamoyl phosphate. This Lactiplantibacillus plantarum (strain ATCC BAA-793 / NCIMB 8826 / WCFS1) (Lactobacillus plantarum) protein is Carbamoyl phosphate synthase pyrimidine-specific large chain (pyrAB).